The following is a 201-amino-acid chain: Small ribosomal subunit protein uS4c (201 aa).

The tract at residues 13–43 (RRLGDLPGLSRKAIKRPYPPGEHGQKPRKPS) is disordered. The region spanning 90–154 (MRLDNTIFRL…SKQLVESYLA (65 aa)) is the S4 RNA-binding domain.

It belongs to the universal ribosomal protein uS4 family. Part of the 30S ribosomal subunit. Contacts protein S5. The interaction surface between S4 and S5 is involved in control of translational fidelity.

It localises to the plastid. Its subcellular location is the chloroplast. Functionally, one of the primary rRNA binding proteins, it binds directly to 16S rRNA where it nucleates assembly of the body of the 30S subunit. With S5 and S12 plays an important role in translational accuracy. In Porphyra purpurea (Red seaweed), this protein is Small ribosomal subunit protein uS4c (rps4).